The sequence spans 127 residues: MSAQASPATELQNPTLGQVYATLTRHSAQQTEFIPHIFYALHQLKNDNGHTNTFETATSNIRHRLKLCKAAIAGDAHAVEMLSRPCDEWPAVVCQKEQEIEAKKRVHRQLRQRVEEIAGPLDAAAAP.

Residues 95–119 are a coiled coil; sequence QKEQEIEAKKRVHRQLRQRVEEIAG.

The protein belongs to the Mediator complex subunit 9 family. Component of the Mediator complex.

It localises to the nucleus. Component of the Mediator complex, a coactivator involved in the regulated transcription of nearly all RNA polymerase II-dependent genes. Mediator functions as a bridge to convey information from gene-specific regulatory proteins to the basal RNA polymerase II transcription machinery. Mediator is recruited to promoters by direct interactions with regulatory proteins and serves as a scaffold for the assembly of a functional preinitiation complex with RNA polymerase II and the general transcription factors. In Eremothecium gossypii (strain ATCC 10895 / CBS 109.51 / FGSC 9923 / NRRL Y-1056) (Yeast), this protein is Mediator of RNA polymerase II transcription subunit 9 (CSE2).